Consider the following 280-residue polypeptide: Urease accessory protein UreD (280 aa).

Belongs to the UreD family. UreD, UreF and UreG form a complex that acts as a GTP-hydrolysis-dependent molecular chaperone, activating the urease apoprotein by helping to assemble the nickel containing metallocenter of UreC. The UreE protein probably delivers the nickel.

The protein resides in the cytoplasm. Functionally, required for maturation of urease via the functional incorporation of the urease nickel metallocenter. This Vibrio parahaemolyticus protein is Urease accessory protein UreD.